Reading from the N-terminus, the 411-residue chain is Translation initiation factor 2 subunit gamma (411 aa).

Positions 9–201 constitute a tr-type G domain; that stretch reads QPTVNIGMVG…AIEKYIPTPE (193 aa). The segment at 18–25 is G1; that stretch reads GHVDHGKS. The Mg(2+) site is built by Asp-21, Ser-25, Gly-46, and Ser-48. Residue 21-26 participates in GTP binding; it reads DHGKST. The segment at 46-50 is G2; it reads GISIK. The interval 88–91 is G3; that stretch reads DAPG. Residues 144–147 and 179–181 contribute to the GTP site; these read NKID and SAY. Positions 144–147 are G4; it reads NKID. Residues 179 to 181 are G5; it reads SAY.

Belongs to the TRAFAC class translation factor GTPase superfamily. Classic translation factor GTPase family. EIF2G subfamily. Heterotrimer composed of an alpha, a beta and a gamma chain. It depends on Mg(2+) as a cofactor.

It carries out the reaction GTP + H2O = GDP + phosphate + H(+). Functionally, eIF-2 functions in the early steps of protein synthesis by forming a ternary complex with GTP and initiator tRNA. This is Translation initiation factor 2 subunit gamma from Thermoplasma volcanium (strain ATCC 51530 / DSM 4299 / JCM 9571 / NBRC 15438 / GSS1).